The following is an 87-amino-acid chain: Polyketide-8 synthase acyl carrier protein 2 (87 aa).

Residues 8–83 (ALDKEQLREL…GTYELLTSKL (76 aa)) form the Carrier domain. An O-(pantetheine 4'-phosphoryl)serine modification is found at serine 43.

Post-translationally, 4'-phosphopantetheine is transferred from CoA to a specific serine of the apo-ACP-like protein.

Its function is as follows. Acyl carrier protein. This chain is Polyketide-8 synthase acyl carrier protein 2, found in Streptomyces avermitilis (strain ATCC 31267 / DSM 46492 / JCM 5070 / NBRC 14893 / NCIMB 12804 / NRRL 8165 / MA-4680).